The following is a 457-amino-acid chain: Siroheme synthase 2 (457 aa).

The interval Met-1–Thr-204 is precorrin-2 dehydrogenase /sirohydrochlorin ferrochelatase. NAD(+) contacts are provided by residues Asp-22–Val-23 and Leu-43–Ala-44. Position 128 is a phosphoserine (Ser-128). Residues Gly-216–Lys-457 are uroporphyrinogen-III C-methyltransferase. Residue Pro-225 participates in S-adenosyl-L-methionine binding. Catalysis depends on Asp-248, which acts as the Proton acceptor. Catalysis depends on Lys-270, which acts as the Proton donor. S-adenosyl-L-methionine-binding positions include Gly-301–Asp-303, Ile-306, Thr-331–Ala-332, Met-382, and Gly-411.

It in the N-terminal section; belongs to the precorrin-2 dehydrogenase / sirohydrochlorin ferrochelatase family. The protein in the C-terminal section; belongs to the precorrin methyltransferase family.

The catalysed reaction is uroporphyrinogen III + 2 S-adenosyl-L-methionine = precorrin-2 + 2 S-adenosyl-L-homocysteine + H(+). It catalyses the reaction precorrin-2 + NAD(+) = sirohydrochlorin + NADH + 2 H(+). It carries out the reaction siroheme + 2 H(+) = sirohydrochlorin + Fe(2+). It functions in the pathway cofactor biosynthesis; adenosylcobalamin biosynthesis; precorrin-2 from uroporphyrinogen III: step 1/1. The protein operates within cofactor biosynthesis; adenosylcobalamin biosynthesis; sirohydrochlorin from precorrin-2: step 1/1. Its pathway is porphyrin-containing compound metabolism; siroheme biosynthesis; precorrin-2 from uroporphyrinogen III: step 1/1. It participates in porphyrin-containing compound metabolism; siroheme biosynthesis; siroheme from sirohydrochlorin: step 1/1. It functions in the pathway porphyrin-containing compound metabolism; siroheme biosynthesis; sirohydrochlorin from precorrin-2: step 1/1. In terms of biological role, multifunctional enzyme that catalyzes the SAM-dependent methylations of uroporphyrinogen III at position C-2 and C-7 to form precorrin-2 via precorrin-1. Then it catalyzes the NAD-dependent ring dehydrogenation of precorrin-2 to yield sirohydrochlorin. Finally, it catalyzes the ferrochelation of sirohydrochlorin to yield siroheme. This Cronobacter sakazakii (strain ATCC BAA-894) (Enterobacter sakazakii) protein is Siroheme synthase 2.